Reading from the N-terminus, the 295-residue chain is Non-selective voltage-gated ion channel VDAC2 (295 aa).

ATP is bound by residues K24 and K32. K32 carries the N6-acetyllysine; alternate modification. An N6-succinyllysine; alternate modification is found at K32. K32 is covalently cross-linked (Glycyl lysine isopeptide (Lys-Gly) (interchain with G-Cter in ubiquitin); alternate). 2 beta stranded membrane passes run 38–47 and 51–59; these read LVKLDVKTKS and VEFSTSGSS. A Glycyl lysine isopeptide (Lys-Gly) (interchain with G-Cter in ubiquitin) cross-link involves residue K65. A beta stranded membrane pass occupies residues 66–76; it reads VSGTLETKYKW. At Y79 the chain carries Phosphotyrosine. Transmembrane regions (beta stranded) follow at residues 81–88, 92–101, and 107–116; these read LTFTEKWN, TLGTEIAIED, and LKLTFDTTFS. T119 carries the post-translational modification Phosphothreonine. Residue K121 is modified to N6-acetyllysine; alternate. K121 participates in a covalent cross-link: Glycyl lysine isopeptide (Lys-Gly) (interchain with G-Cter in ubiquitin); alternate. K122 participates in a covalent cross-link: Glycyl lysine isopeptide (Lys-Gly) (interchain with G-Cter in ubiquitin). Transmembrane regions (beta stranded) follow at residues 123–132, 135–142, 149–157, and 162–170; these read SGKIKSAYKR, INLGCDVD, AIHGSAVFG, and LAGYQMTFD. K173 participates in a covalent cross-link: Glycyl lysine isopeptide (Lys-Gly) (interchain with G-Cter in ubiquitin). Transmembrane regions (beta stranded) follow at residues 175-187, 190-197, 201-210, 214-223, 230-239, and 243-250; these read KLTR…GYRT, FQLHTNVN, EFGGSIYQKV, FDTSVNLAWT, RFGIAAKYQL, and ASISAKVN. The residue at position 237 (Y237) is a Phosphotyrosine. Position 252 is a phosphoserine (S252). NAD(+) is bound by residues 254-256 and 272-276; these read LIG and SALVD. 2 beta stranded membrane-spanning segments follow: residues 254 to 263 and 266 to 275; these read LIGVGYTQTL and GVKLTLSALV. K278 is modified (N6-acetyllysine; alternate). Residue K278 forms a Glycyl lysine isopeptide (Lys-Gly) (interchain with G-Cter in ubiquitin); alternate linkage. Residues 285-294 traverse the membrane as a beta stranded segment; sequence HKLGLALELE.

The protein belongs to the eukaryotic mitochondrial porin family. As to quaternary structure, monomer, homodimer and higher order oligomers; formation of higher order structures is necessary for scramblase activity. Interacts with ARMC12 in a TBC1D21-dependent manner. Interacts with KLC3. Interacts with SPATA33. Interacts with PPP3CC in a SPATA33-dependent manner. Post-translationally, ubiquitinated by PRKN during mitophagy, leading to its degradation and enhancement of mitophagy. Deubiquitinated by USP30. As to expression, highly expressed in heart, kidney, brain and ascitic tumor with very low levels in liver. Expressed in the head region of epididymal sperm.

Its subcellular location is the mitochondrion outer membrane. It localises to the membrane. The enzyme catalyses chloride(in) = chloride(out). The catalysed reaction is K(+)(in) = K(+)(out). It carries out the reaction a 1,2-diacyl-sn-glycero-3-phospho-L-serine(in) = a 1,2-diacyl-sn-glycero-3-phospho-L-serine(out). It catalyses the reaction a 1,2-diacyl-sn-glycero-3-phosphocholine(in) = a 1,2-diacyl-sn-glycero-3-phosphocholine(out). The enzyme catalyses a 1,2-diacyl-sn-glycero-3-phospho-(1D-myo-inositol)(in) = a 1,2-diacyl-sn-glycero-3-phospho-(1D-myo-inositol)(out). Functionally, non-selective voltage-gated ion channel that mediates the transport of anions and cations through the mitochondrion outer membrane and plasma membrane. The channel adopts an open conformation at zero mV and a closed conformation at both positive and negative potentials. There are two populations of channels; the main that functions in a lower open-state conductance with lower ion selectivity, that switch, in a voltage-dependent manner, from the open to a low-conducting 'closed' state and the other that has a normal ion selectivity in the typical high conductance, 'open' state. Binds various lipids, including the sphingolipid ceramide, the phospholipid phosphatidylcholine, and the sterols cholesterol and oxysterol. Binding of ceramide promotes the mitochondrial outer membrane permeabilization (MOMP) apoptotic pathway. Catalyzes the scrambling of phospholipids across the outer mitochondrial membrane; the mechanism is unrelated to channel activity and is capable of translocating both anionic and zwitterionic phospholipids. This is Non-selective voltage-gated ion channel VDAC2 from Rattus norvegicus (Rat).